Consider the following 193-residue polypeptide: Erythropoietin (193 aa).

The first 27 residues, 1 to 27 (MGVHECPAWLWLLLSLLSLPLGLPVLG), serve as a signal peptide directing secretion. Disulfide bonds link Cys-34/Cys-188 and Cys-56/Cys-60. Residue Asn-51 is glycosylated (N-linked (GlcNAc...) asparagine). N-linked (GlcNAc...) asparagine glycosylation is found at Asn-65 and Asn-110. Ser-153 is a glycosylation site (O-linked (GalNAc...) serine).

This sequence belongs to the EPO/TPO family. As to expression, produced by kidney or liver of adult mammals and by liver of fetal or neonatal mammals.

It localises to the secreted. In terms of biological role, hormone involved in the regulation of erythrocyte proliferation and differentiation and the maintenance of a physiological level of circulating erythrocyte mass. Binds to EPOR leading to EPOR dimerization and JAK2 activation thereby activating specific downstream effectors, including STAT1 and STAT3. The chain is Erythropoietin (EPO) from Homo sapiens (Human).